Consider the following 408-residue polypeptide: Histidine--tRNA ligase (408 aa).

It belongs to the class-II aminoacyl-tRNA synthetase family. As to quaternary structure, homodimer.

The protein resides in the cytoplasm. It carries out the reaction tRNA(His) + L-histidine + ATP = L-histidyl-tRNA(His) + AMP + diphosphate + H(+). This Campylobacter concisus (strain 13826) protein is Histidine--tRNA ligase.